Reading from the N-terminus, the 130-residue chain is Small ribosomal subunit protein uS9 (130 aa).

It belongs to the universal ribosomal protein uS9 family.

This chain is Small ribosomal subunit protein uS9, found in Thioalkalivibrio sulfidiphilus (strain HL-EbGR7).